The following is a 146-amino-acid chain: Small ribosomal subunit protein uS9x (146 aa).

It belongs to the universal ribosomal protein uS9 family.

Its subcellular location is the cytoplasm. The protein is Small ribosomal subunit protein uS9x (RPS16C) of Arabidopsis thaliana (Mouse-ear cress).